The sequence spans 345 residues: Acetylserotonin O-methyltransferase (345 aa).

Residues tyrosine 147, tryptophan 164, aspartate 210, 235 to 237 (GDF), and arginine 252 contribute to the S-adenosyl-L-methionine site. Histidine 255 functions as the Proton donor/acceptor in the catalytic mechanism. Substrate-binding residues include aspartate 256, asparagine 302, and glutamine 306.

The protein belongs to the class I-like SAM-binding methyltransferase superfamily. Cation-independent O-methyltransferase family. Homodimer. In terms of tissue distribution, expressed in the pineal gland (at protein level). In the retina, very low expression is found at the mRNA level, and not at the protein level.

The enzyme catalyses N-acetylserotonin + S-adenosyl-L-methionine = melatonin + S-adenosyl-L-homocysteine + H(+). The protein operates within aromatic compound metabolism; melatonin biosynthesis; melatonin from serotonin: step 1/2. Functionally, catalyzes the transfer of a methyl group onto N-acetylserotonin, producing melatonin (N-acetyl-5-methoxytryptamine). Its function is as follows. Does not show Acetylserotonin O-methyltransferase activity. The protein is Acetylserotonin O-methyltransferase (ASMT) of Homo sapiens (Human).